We begin with the raw amino-acid sequence, 193 residues long: Putative manganese efflux pump MntP (193 aa).

Transmembrane regions (helical) follow at residues 3 to 23 (MYAT…ASIC), 41 to 61 (LIFG…GLYA), 65 to 85 (IIEW…CRMI), 106 to 126 (IVLI…GIGL), 133 to 153 (IVHT…LGML), and 169 to 189 (IGGL…LELF).

The protein belongs to the MntP (TC 9.B.29) family.

Its subcellular location is the cell inner membrane. In terms of biological role, probably functions as a manganese efflux pump. This Photorhabdus laumondii subsp. laumondii (strain DSM 15139 / CIP 105565 / TT01) (Photorhabdus luminescens subsp. laumondii) protein is Putative manganese efflux pump MntP.